Reading from the N-terminus, the 508-residue chain is Photosystem II CP47 reaction center protein (508 aa).

Transmembrane regions (helical) follow at residues 21 to 36 (SVHI…WAGS), 101 to 115 (IVFS…IWHW), 140 to 156 (GIHL…FGAF), 203 to 218 (IAAG…FHLS), 237 to 252 (VLSS…AFVV), and 457 to 472 (SFAL…HGAR).

Belongs to the PsbB/PsbC family. PsbB subfamily. In terms of assembly, PSII is composed of 1 copy each of membrane proteins PsbA, PsbB, PsbC, PsbD, PsbE, PsbF, PsbH, PsbI, PsbJ, PsbK, PsbL, PsbM, PsbT, PsbX, PsbY, PsbZ, Psb30/Ycf12, at least 3 peripheral proteins of the oxygen-evolving complex and a large number of cofactors. It forms dimeric complexes. It depends on Binds multiple chlorophylls. PSII binds additional chlorophylls, carotenoids and specific lipids. as a cofactor.

It is found in the plastid. Its subcellular location is the chloroplast thylakoid membrane. One of the components of the core complex of photosystem II (PSII). It binds chlorophyll and helps catalyze the primary light-induced photochemical processes of PSII. PSII is a light-driven water:plastoquinone oxidoreductase, using light energy to abstract electrons from H(2)O, generating O(2) and a proton gradient subsequently used for ATP formation. The sequence is that of Photosystem II CP47 reaction center protein from Ipomoea purpurea (Common morning glory).